The primary structure comprises 494 residues: Monocarboxylate transporter 1 (494 aa).

At 1–22 the chain is on the cytoplasmic side; sequence MPPAIGGPVGYTPPDGGWGWAV. Residues 23-44 form a helical membrane-spanning segment; sequence VVGAFISIGFSYAFPKSITVFF. Lysine 38 is a (S)-lactate binding site. Over 45–55 the chain is Extracellular; that stretch reads KEIEIIFSATT. The chain crosses the membrane as a helical span at residues 56–80; that stretch reads SEVSWISSIMLAVMYAGGPISSILV. Residues 81-84 lie on the Cytoplasmic side of the membrane; that stretch reads NKYG. A helical membrane pass occupies residues 85-105; sequence SRPVMIAGGCLSGCGLIAASF. Residues 106-109 are Extracellular-facing; the sequence is CNTV. The chain crosses the membrane as a helical span at residues 110–132; that stretch reads QELYFCIGVIGGLGLAFNLNPAL. Residues 133–146 lie on the Cytoplasmic side of the membrane; that stretch reads TMIGKYFYKKRPLA. A helical transmembrane segment spans residues 147–169; it reads NGLAMAGSPVFLSTLAPLNQAFF. The Extracellular portion of the chain corresponds to 170–174; the sequence is GIFGW. The chain crosses the membrane as a helical span at residues 175-194; the sequence is RGSFLILGGLLLNCCVAGSL. Residues 195–254 are Cytoplasmic-facing; the sequence is MRPIGPQQGKVEKLKSKESLQEAGKSDANTDLIGGSPKGEKLSVFQTVNKFLDLSLFTHR. Phosphoserine is present on residues serine 210, serine 213, and serine 220. Phosphothreonine is present on threonine 224. Serine 230 is subject to Phosphoserine. A helical transmembrane segment spans residues 255 to 281; that stretch reads GFLLYLSGNVVMFFGLFTPLVFLSNYG. Residues 282–288 lie on the Extracellular side of the membrane; that stretch reads KSKHFSS. The chain crosses the membrane as a helical span at residues 289–310; sequence EKSAFLLSILAFVDMVARPSMG. H(+) is bound at residue aspartate 302. A (S)-lactate-binding site is contributed by arginine 306. Over 311-321 the chain is Cytoplasmic; it reads LAANTRWIRPR. The chain crosses the membrane as a helical span at residues 322–342; sequence VQYFFAASVVANGVCHLLAPL. Residues 343–346 lie on the Extracellular side of the membrane; the sequence is STTY. Residues 347–368 form a helical membrane-spanning segment; the sequence is VGFCIYAGVFGFAFGWLSSVLF. The Cytoplasmic portion of the chain corresponds to 369–382; it reads ETLMDLVGPQRFSS. The helical transmembrane segment at 383–403 threads the bilayer; it reads AVGLVTIVECCPVLLGPPLLG. The Extracellular segment spans residues 404-414; the sequence is RLNDMYGDYKY. The chain crosses the membrane as a helical span at residues 415–436; the sequence is TYWACGVILIIAGLYLFIGMGI. The Cytoplasmic portion of the chain corresponds to 437 to 494; that stretch reads NYRLVAKEQKAEEKKRDGKEDETSTDVDEKPKKTMKETQSPAPLQNSSGDPAEEESPV. Positions 446 to 472 are enriched in basic and acidic residues; the sequence is KAEEKKRDGKEDETSTDVDEKPKKTMK. Positions 446-494 are disordered; that stretch reads KAEEKKRDGKEDETSTDVDEKPKKTMKETQSPAPLQNSSGDPAEEESPV. The residue at position 459 (threonine 459) is a Phosphothreonine. Serine 460 bears the Phosphoserine mark. Threonine 461 carries the phosphothreonine modification. Over residues 473–485 the composition is skewed to polar residues; it reads ETQSPAPLQNSSG. Serine 476, serine 483, serine 484, and serine 492 each carry phosphoserine.

Belongs to the major facilitator superfamily. Monocarboxylate porter (TC 2.A.1.13) family. As to quaternary structure, interacts with BSG. Interacts with EMB. Interaction with either BSG or EMB is required for expression at the cell membrane. In terms of tissue distribution, detected in erythrocytes (at protein level). Detected in brain, heart, kidney, lung, muscle, jejunum enterocytes and brain capillaries.

The protein resides in the cell membrane. Its subcellular location is the basolateral cell membrane. The protein localises to the apical cell membrane. It catalyses the reaction (S)-lactate(in) + H(+)(in) = (S)-lactate(out) + H(+)(out). It carries out the reaction pyruvate(out) + H(+)(out) = pyruvate(in) + H(+)(in). The enzyme catalyses acetoacetate(out) + H(+)(out) = acetoacetate(in) + H(+)(in). The catalysed reaction is (S)-3-hydroxybutanoate(out) + H(+)(out) = (S)-3-hydroxybutanoate(in) + H(+)(in). It catalyses the reaction (R)-3-hydroxybutanoate(out) + H(+)(out) = (R)-3-hydroxybutanoate(in) + H(+)(in). It carries out the reaction 3-methyl-2-oxobutanoate(out) + H(+)(out) = 3-methyl-2-oxobutanoate(in) + H(+)(in). The enzyme catalyses 4-methyl-2-oxopentanoate(out) + H(+)(out) = 4-methyl-2-oxopentanoate(in) + H(+)(in). Inhibited by stilbene disulfonates, such as di-isothiocyanostilbene disulfonate(DIDS), a cross-linking reagent that forms covalent linkages with lysine groups. In terms of biological role, bidirectional proton-coupled monocarboxylate transporter. Catalyzes the rapid transport across the plasma membrane of many monocarboxylates such as lactate, pyruvate, acetate and the ketone bodies acetoacetate and beta-hydroxybutyrate, and thus contributes to the maintenance of intracellular pH. The transport direction is determined by the proton motive force and the concentration gradient of the substrate monocarboxylate. MCT1 is a major lactate exporter. Plays a role in cellular responses to a high-fat diet by modulating the cellular levels of lactate and pyruvate that contribute to the regulation of central metabolic pathways and insulin secretion, with concomitant effects on plasma insulin levels and blood glucose homeostasis. Facilitates the protonated monocarboxylate form of succinate export, that its transient protonation upon muscle cell acidification in exercising muscle and ischemic heart. Functions via alternate outward- and inward-open conformation states. Protonation and deprotonation of 302-Asp is essential for the conformational transition. The polypeptide is Monocarboxylate transporter 1 (Slc16a1) (Rattus norvegicus (Rat)).